Here is a 476-residue protein sequence, read N- to C-terminus: Bifunctional protein HldE (476 aa).

The segment at 1–318 (MLSKKPNILV…EYESSLHKSN (318 aa)) is ribokinase. 195-198 (NKKE) provides a ligand contact to ATP. Aspartate 263 is an active-site residue. Positions 345 to 476 (FTNGCFDILH…RIQENEKCNN (132 aa)) are cytidylyltransferase.

The protein in the N-terminal section; belongs to the carbohydrate kinase PfkB family. In the C-terminal section; belongs to the cytidylyltransferase family. In terms of assembly, homodimer.

It catalyses the reaction D-glycero-beta-D-manno-heptose 7-phosphate + ATP = D-glycero-beta-D-manno-heptose 1,7-bisphosphate + ADP + H(+). The enzyme catalyses D-glycero-beta-D-manno-heptose 1-phosphate + ATP + H(+) = ADP-D-glycero-beta-D-manno-heptose + diphosphate. It participates in nucleotide-sugar biosynthesis; ADP-L-glycero-beta-D-manno-heptose biosynthesis; ADP-L-glycero-beta-D-manno-heptose from D-glycero-beta-D-manno-heptose 7-phosphate: step 1/4. Its pathway is nucleotide-sugar biosynthesis; ADP-L-glycero-beta-D-manno-heptose biosynthesis; ADP-L-glycero-beta-D-manno-heptose from D-glycero-beta-D-manno-heptose 7-phosphate: step 3/4. Catalyzes the phosphorylation of D-glycero-D-manno-heptose 7-phosphate at the C-1 position to selectively form D-glycero-beta-D-manno-heptose-1,7-bisphosphate. In terms of biological role, catalyzes the ADP transfer from ATP to D-glycero-beta-D-manno-heptose 1-phosphate, yielding ADP-D-glycero-beta-D-manno-heptose. This chain is Bifunctional protein HldE, found in Aliarcobacter butzleri (strain RM4018) (Arcobacter butzleri).